The following is a 364-amino-acid chain: MPHSYPALSAEQKKELSDIALRIVAPGKGILAADESVGSMAKRLSQIGVENTEENRRLYRQVLFSADDRVKKCIGGVIFFHETLYQKDDNGVPFIRTILDKGIVVGIKVDKGVVPLAGTDGETTTQGLDGLSERCAQYKKDGADFAKWRCVLKISERTPSALAILENANVLARYASICQQNGIVPIVEPEILPDGDHDLKRCQYVTEKVLAAVYKALSDHHVYLEGTLLKPNMVTPGHACPIKYTPEEIAMATVTALRRTVPPAVPGVTFLSGGQSEEEASFNLNAINRCPLPRPWALTFSYGRALQASALNAWRGQRDNAEAATEEFIKRAEVNGLAAQGKYEGSGEDGGAAAQSLYIANHAY.

Tyr5 carries the phosphotyrosine modification. Phosphoserine is present on residues Ser36, Ser39, and Ser45. Arg56 serves as a coordination point for substrate. Lys111 is subject to N6-acetyllysine. Ser132 is subject to Phosphoserine. Residue Lys147 coordinates substrate. Glu188 serves as the catalytic Proton acceptor. Catalysis depends on Lys230, which acts as the Schiff-base intermediate with dihydroxyacetone-P.

It belongs to the class I fructose-bisphosphate aldolase family. In terms of assembly, homotetramer. Interacts with ATP6V1E1.

The enzyme catalyses beta-D-fructose 1,6-bisphosphate = D-glyceraldehyde 3-phosphate + dihydroxyacetone phosphate. Its pathway is carbohydrate degradation; glycolysis; D-glyceraldehyde 3-phosphate and glycerone phosphate from D-glucose: step 4/4. In Pan troglodytes (Chimpanzee), this protein is Fructose-bisphosphate aldolase C (ALDOC).